We begin with the raw amino-acid sequence, 428 residues long: Serine--tRNA ligase (428 aa).

231–233 serves as a coordination point for L-serine; it reads TAE. ATP is bound at residue 262–264; that stretch reads RAE. Residue E285 coordinates L-serine. 349–352 contacts ATP; the sequence is EISS. S385 is an L-serine binding site.

Belongs to the class-II aminoacyl-tRNA synthetase family. Type-1 seryl-tRNA synthetase subfamily. Homodimer. The tRNA molecule binds across the dimer.

It localises to the cytoplasm. It carries out the reaction tRNA(Ser) + L-serine + ATP = L-seryl-tRNA(Ser) + AMP + diphosphate + H(+). It catalyses the reaction tRNA(Sec) + L-serine + ATP = L-seryl-tRNA(Sec) + AMP + diphosphate + H(+). Its pathway is aminoacyl-tRNA biosynthesis; selenocysteinyl-tRNA(Sec) biosynthesis; L-seryl-tRNA(Sec) from L-serine and tRNA(Sec): step 1/1. Functionally, catalyzes the attachment of serine to tRNA(Ser). Is also able to aminoacylate tRNA(Sec) with serine, to form the misacylated tRNA L-seryl-tRNA(Sec), which will be further converted into selenocysteinyl-tRNA(Sec). This Methylorubrum extorquens (strain PA1) (Methylobacterium extorquens) protein is Serine--tRNA ligase.